The chain runs to 156 residues: Small ribosomal subunit protein uS7 (156 aa).

This sequence belongs to the universal ribosomal protein uS7 family. In terms of assembly, part of the 30S ribosomal subunit. Contacts proteins S9 and S11.

One of the primary rRNA binding proteins, it binds directly to 16S rRNA where it nucleates assembly of the head domain of the 30S subunit. Is located at the subunit interface close to the decoding center, probably blocks exit of the E-site tRNA. The chain is Small ribosomal subunit protein uS7 from Mesomycoplasma hyopneumoniae (strain 232) (Mycoplasma hyopneumoniae).